A 600-amino-acid polypeptide reads, in one-letter code: Aspartate--tRNA ligase (600 aa).

L-aspartate is bound at residue Glu-175. The segment at 199–202 (QLFK) is aspartate. Arg-221 contributes to the L-aspartate binding site. Residues 221-223 (RDE) and Gln-230 contribute to the ATP site. His-448 is an L-aspartate binding site. Residue Glu-484 coordinates ATP. Arg-491 lines the L-aspartate pocket. 536–539 (GLDR) provides a ligand contact to ATP.

The protein belongs to the class-II aminoacyl-tRNA synthetase family. Type 1 subfamily. In terms of assembly, homodimer.

The protein localises to the cytoplasm. It catalyses the reaction tRNA(Asp) + L-aspartate + ATP = L-aspartyl-tRNA(Asp) + AMP + diphosphate. Its function is as follows. Catalyzes the attachment of L-aspartate to tRNA(Asp) in a two-step reaction: L-aspartate is first activated by ATP to form Asp-AMP and then transferred to the acceptor end of tRNA(Asp). This Limosilactobacillus reuteri (strain DSM 20016) (Lactobacillus reuteri) protein is Aspartate--tRNA ligase.